We begin with the raw amino-acid sequence, 131 residues long: Small ribosomal subunit protein uS8 (131 aa).

Belongs to the universal ribosomal protein uS8 family. Part of the 30S ribosomal subunit. Contacts proteins S5 and S12.

Its function is as follows. One of the primary rRNA binding proteins, it binds directly to 16S rRNA central domain where it helps coordinate assembly of the platform of the 30S subunit. The sequence is that of Small ribosomal subunit protein uS8 from Geobacillus stearothermophilus (Bacillus stearothermophilus).